Consider the following 349-residue polypeptide: DNA polymerase IV (349 aa).

Residues 4–185 form the UmuC domain; that stretch reads IIHIDCDCFY…LPVAKLHGVG (182 aa). Residues Asp-8 and Asp-103 each contribute to the Mg(2+) site. Glu-104 is an active-site residue.

Belongs to the DNA polymerase type-Y family. In terms of assembly, monomer. The cofactor is Mg(2+).

It localises to the cytoplasm. It catalyses the reaction DNA(n) + a 2'-deoxyribonucleoside 5'-triphosphate = DNA(n+1) + diphosphate. Poorly processive, error-prone DNA polymerase involved in untargeted mutagenesis. Copies undamaged DNA at stalled replication forks, which arise in vivo from mismatched or misaligned primer ends. These misaligned primers can be extended by PolIV. Exhibits no 3'-5' exonuclease (proofreading) activity. May be involved in translesional synthesis, in conjunction with the beta clamp from PolIII. The protein is DNA polymerase IV of Pseudomonas paraeruginosa (strain DSM 24068 / PA7) (Pseudomonas aeruginosa (strain PA7)).